Here is a 500-residue protein sequence, read N- to C-terminus: Cytochrome P450 71B26 (500 aa).

Residues M1–F21 form a helical membrane-spanning segment. C440 lines the heme pocket.

It belongs to the cytochrome P450 family. Heme serves as cofactor.

The protein localises to the membrane. This is Cytochrome P450 71B26 (CYP71B26) from Arabidopsis thaliana (Mouse-ear cress).